Reading from the N-terminus, the 147-residue chain is Hemoglobin subunit beta (147 aa).

Val2 bears the N-acetylvaline mark. In terms of domain architecture, Globin spans 3–147 (HLTGEEKAAV…VANALAHKYH (145 aa)). Thr13 carries the phosphothreonine modification. Ser45 carries the phosphoserine modification. Position 60 is an N6-acetyllysine (Lys60). Position 64 (His64) interacts with heme b. Position 83 is an N6-acetyllysine (Lys83). His93 contributes to the heme b binding site. Cys94 bears the S-nitrosocysteine mark. Lys145 carries the post-translational modification N6-acetyllysine.

It belongs to the globin family. In terms of assembly, heterotetramer of two alpha chains and two beta chains. Red blood cells.

In terms of biological role, involved in oxygen transport from the lung to the various peripheral tissues. This Aotus azarae (Azara's night monkey) protein is Hemoglobin subunit beta (HBB).